The following is a 222-amino-acid chain: Cytolethal distending toxin subunit A (222 aa).

An N-terminal signal peptide occupies residues 1–15 (MKKFLPGLLLMGLVA). Cysteine 16 carries the N-palmitoyl cysteine lipid modification. A lipid anchor (S-diacylglycerol cysteine) is attached at cysteine 16. The interval 22-44 (MSDYSQPESQSDLAPKSSTTQFQ) is disordered. Residues 90-101 (WALAKRNWLWAY) are mediates binding to target cells. A Ricin B-type lectin domain is found at 122–211 (HREYFRFVNQ…EPLRDQTWYL (90 aa)).

In terms of assembly, heterotrimer of 3 subunits, CdtA, CdtB and CdtC. May form higher oligomers.

Its subcellular location is the cell outer membrane. Functionally, CDTs are cytotoxins which induce host cell distension, growth arrest in G2/M phase, nucleus swelling, and chromatin fragmentation in HeLa cells. This Aggregatibacter actinomycetemcomitans (Actinobacillus actinomycetemcomitans) protein is Cytolethal distending toxin subunit A (cdtA).